A 94-amino-acid chain; its full sequence is Pyrimidine/purine nucleoside phosphorylase 2 (94 aa).

The protein belongs to the nucleoside phosphorylase PpnP family.

It catalyses the reaction a purine D-ribonucleoside + phosphate = a purine nucleobase + alpha-D-ribose 1-phosphate. The enzyme catalyses adenosine + phosphate = alpha-D-ribose 1-phosphate + adenine. It carries out the reaction cytidine + phosphate = cytosine + alpha-D-ribose 1-phosphate. The catalysed reaction is guanosine + phosphate = alpha-D-ribose 1-phosphate + guanine. It catalyses the reaction inosine + phosphate = alpha-D-ribose 1-phosphate + hypoxanthine. The enzyme catalyses thymidine + phosphate = 2-deoxy-alpha-D-ribose 1-phosphate + thymine. It carries out the reaction uridine + phosphate = alpha-D-ribose 1-phosphate + uracil. The catalysed reaction is xanthosine + phosphate = alpha-D-ribose 1-phosphate + xanthine. Catalyzes the phosphorolysis of diverse nucleosides, yielding D-ribose 1-phosphate and the respective free bases. Can use uridine, adenosine, guanosine, cytidine, thymidine, inosine and xanthosine as substrates. Also catalyzes the reverse reactions. The chain is Pyrimidine/purine nucleoside phosphorylase 2 from Psychrobacter arcticus (strain DSM 17307 / VKM B-2377 / 273-4).